The sequence spans 443 residues: Citrate transporter CitP (443 aa).

13 helical membrane passes run 27–47 (ISGI…IAIS), 59–79 (IFAL…LPIF), 83–103 (LGGG…TNVM), 114–134 (FING…SSLF), 151–171 (VAFI…VIIG), 177–197 (AILY…IVPL), 209–229 (SAGI…LAII), 268–288 (YVQL…GTML), 294–314 (GINA…FGLL), 322–342 (VIMF…AGVG), 350–370 (VLLA…IVAI), 388–410 (AAIT…VLAA), and 422–442 (MGNR…VTFM).

Belongs to the 2-hydroxycarboxylate transporter (2-HCT) (TC 2.A.24) family.

The protein resides in the cell membrane. The catalysed reaction is (R)-lactate(in) + citrate(out) = (R)-lactate(out) + citrate(in). It carries out the reaction (S)-lactate(in) + citrate(out) = (S)-lactate(out) + citrate(in). The enzyme catalyses citrate(in) + H(+)(in) = citrate(out) + H(+)(out). Its activity is regulated as follows. Uptake of citrate is not affected by the absence or presence of Na(+) up to 25 mM and is increasingly inhibited by increasing Mg(2+) concentrations. Functionally, secondary transporter involved in citrate metabolism. During cometabolism of citrate and glucose, catalyzes the uptake of divalent citrate into the cell coupled to the exit of monovalent lactate, a product of citrate fermentation during citrate-glucose cometabolism (precursor/product exchange). The citrate/lactate exchange is electrogenic and results in the generation of a membrane potential. In the absence of glucose, i.e. when no lactate is produced, CitP catalyzes the proton-dependent transport of citrate and malate. Transports the divalent form of citrate and malate with the concomitant uptake of one proton, therefore translocating a single unit of negative charge across the membrane. In vitro, transports a range of substrates that contain the 2-hydroxycarboxylate motif, HO-CR(2)-COO(-), with a preference for malate, citrate and monovalent 2-hydroxyisobutyrate. Modification of the OH or the COO(-) groups of the 2-hydroxycarboxylate motif drastically reduces the affinity of the transporter for the substrates, indicating their relevance in substrate recognition. Significant activity is also observed with some 2-oxocarboxylates and a 3-hydroxycarboxylate. The chain is Citrate transporter CitP from Leuconostoc mesenteroides subsp. mesenteroides.